The primary structure comprises 1664 residues: MYND-type zinc finger-containing chromatin reader Zmynd8 (1664 aa).

Low complexity-rich tracts occupy residues 1–16 (MESTDSSDSSGDSLKS), 30–40 (SPQPQLQSSSL), and 61–84 (SAPPGSANCSSNSSSSSPSNINVG). Disordered regions lie at residues 1–84 (MEST…INVG), 251–271 (SLSNSWSNDDKGPRRSNLRSE), and 295–323 (LALNTSGEGESSLFSDASDTKTTTAKTPE). Basic and acidic residues predominate over residues 258-271 (NDDKGPRRSNLRSE). Residues 296 to 308 (ALNTSGEGESSLF) are compositionally biased toward polar residues. Residues 309-320 (SDASDTKTTTAK) show a composition bias toward low complexity. The PHD-type zinc finger occupies 343–389 (DPFCWKCRGCGKLMPCSKCLRSFHSYCVRPATTKFDSSWKCPECQVI). 8 residues coordinate Zn(2+): C346, C349, C358, C361, H366, C369, C383, and C386. The Bromo domain maps to 401–504 (VSVDLLSQLL…KVCRQEANEI (104 aa)). C507, C510, and C525 together coordinate Zn(2+). Residues 528-579 (PHLLLWAKLKGFPYWPAKAMGSSNSTLVNVRFFGKHDRAFVPVKDCFLYSAQ) enclose the PWWP domain. Disordered stretches follow at residues 672-693 (KTKATESGNESDQSPSPTKKLS), 747-815 (ESVE…QNEN), 857-905 (KIPR…RQQE), and 919-1139 (TEVM…TNTS). The segment covering 676 to 690 (TESGNESDQSPSPTK) has biased composition (polar residues). Residues 775 to 784 (HKRKSKHARK) show a composition bias toward basic residues. Basic and acidic residues predominate over residues 785–800 (QHDNQDNQIEEAEKTG). The segment covering 874-884 (IPLPTAPPPKQ) has biased composition (pro residues). Residues 935–952 (PANQPQTDQVPLQQETIT) are compositionally biased toward polar residues. Positions 953–962 (AQPESQMPAA) are enriched in low complexity. Positions 1006–1019 (PPMPLPMPPPPPLP) are enriched in pro residues. The segment covering 1037-1053 (TTIQRVSQKQGGKSTDT) has biased composition (polar residues). The span at 1073–1097 (SPTHSPLLSTAPSPSASPKPTSTLA) shows a compositional bias: low complexity. Zn(2+)-binding residues include C1399, C1402, C1410, C1411, C1417, C1421, H1429, and C1433. The segment at 1399-1433 (CANCMREAQLYCCWNTSYCDYPCQQLHWPGHSATC) adopts an MYND-type zinc-finger fold. Residues 1613-1648 (VPKATGRSGKNNSRMRQTYSNNINNSNPQGMRCNNN) form a disordered region. Over residues 1620 to 1648 (SGKNNSRMRQTYSNNINNSNPQGMRCNNN) the composition is skewed to polar residues.

It is found in the nucleus. Its subcellular location is the chromosome. Its function is as follows. Chromatin reader that recognizes specific histone signatures to regulate transcription. Plays a role in neuronal development. The sequence is that of MYND-type zinc finger-containing chromatin reader Zmynd8 from Drosophila melanogaster (Fruit fly).